Here is a 383-residue protein sequence, read N- to C-terminus: Queuine tRNA-ribosyltransferase (383 aa).

Aspartate 89 (proton acceptor) is an active-site residue. Residues 89–93 (DSGGF), aspartate 143, glutamine 187, and glycine 214 each bind substrate. The RNA binding stretch occupies residues 245–251 (GVGDLID). The active-site Nucleophile is aspartate 264. The RNA binding; important for wobble base 34 recognition stretch occupies residues 269-273 (TRNAR). 4 residues coordinate Zn(2+): cysteine 302, cysteine 304, cysteine 307, and histidine 333.

The protein belongs to the queuine tRNA-ribosyltransferase family. Homodimer. Within each dimer, one monomer is responsible for RNA recognition and catalysis, while the other monomer binds to the replacement base PreQ1. It depends on Zn(2+) as a cofactor.

It catalyses the reaction 7-aminomethyl-7-carbaguanine + guanosine(34) in tRNA = 7-aminomethyl-7-carbaguanosine(34) in tRNA + guanine. It participates in tRNA modification; tRNA-queuosine biosynthesis. Functionally, catalyzes the base-exchange of a guanine (G) residue with the queuine precursor 7-aminomethyl-7-deazaguanine (PreQ1) at position 34 (anticodon wobble position) in tRNAs with GU(N) anticodons (tRNA-Asp, -Asn, -His and -Tyr). Catalysis occurs through a double-displacement mechanism. The nucleophile active site attacks the C1' of nucleotide 34 to detach the guanine base from the RNA, forming a covalent enzyme-RNA intermediate. The proton acceptor active site deprotonates the incoming PreQ1, allowing a nucleophilic attack on the C1' of the ribose to form the product. After dissociation, two additional enzymatic reactions on the tRNA convert PreQ1 to queuine (Q), resulting in the hypermodified nucleoside queuosine (7-(((4,5-cis-dihydroxy-2-cyclopenten-1-yl)amino)methyl)-7-deazaguanosine). This is Queuine tRNA-ribosyltransferase from Thermodesulfovibrio yellowstonii (strain ATCC 51303 / DSM 11347 / YP87).